The sequence spans 354 residues: Putative [LysW]-L-2-aminoadipate/[LysW]-L-glutamate phosphate reductase (354 aa).

NADP(+)-binding positions include 10 to 13 and 34 to 36; these read SGVI and SRR. Residue C153 is part of the active site. N321 is a binding site for NADP(+).

Belongs to the NAGSA dehydrogenase family. Type 1 subfamily. LysY sub-subfamily.

It is found in the cytoplasm. It catalyses the reaction [amino-group carrier protein]-C-terminal-N-(1-carboxy-5-oxopentan-1-yl)-L-glutamine + phosphate + NADP(+) = [amino-group carrier protein]-C-terminal-N-(1-carboxy-5-phosphooxy-5-oxopentan-1-yl)-L-glutamine + NADPH + H(+). The enzyme catalyses [amino-group carrier protein]-C-terminal-gamma-(L-glutamyl-5-semialdehyde)-L-glutamate + phosphate + NADP(+) = [amino-group carrier protein]-C-terminal-gamma-(5-phospho-L-glutamyl)-L-glutamate + NADPH + H(+). It participates in amino-acid biosynthesis; L-lysine biosynthesis via AAA pathway; L-lysine from L-alpha-aminoadipate (Thermus route): step 3/5. The protein operates within amino-acid biosynthesis; L-arginine biosynthesis. In terms of biological role, involved in both the arginine and lysine biosynthetic pathways. This is Putative [LysW]-L-2-aminoadipate/[LysW]-L-glutamate phosphate reductase from Caldivirga maquilingensis (strain ATCC 700844 / DSM 13496 / JCM 10307 / IC-167).